Consider the following 363-residue polypeptide: Flagellar P-ring protein (363 aa).

The first 20 residues, 1-20 (MKCKLIFAVFMLAFSMPSQA), serve as a signal peptide directing secretion.

The protein belongs to the FlgI family. As to quaternary structure, the basal body constitutes a major portion of the flagellar organelle and consists of four rings (L,P,S, and M) mounted on a central rod.

The protein resides in the periplasm. Its subcellular location is the bacterial flagellum basal body. Functionally, assembles around the rod to form the L-ring and probably protects the motor/basal body from shearing forces during rotation. The polypeptide is Flagellar P-ring protein (Shewanella oneidensis (strain ATCC 700550 / JCM 31522 / CIP 106686 / LMG 19005 / NCIMB 14063 / MR-1)).